The sequence spans 255 residues: Increased copper sensitivity protein 2 (255 aa).

The span at 1-12 shows a compositional bias: basic and acidic residues; that stretch reads MGKFEQKERERI. Disordered regions lie at residues 1 to 32 and 82 to 142; these read MGKF…KSLG and PGDK…RKSH. Positions 13–30 are enriched in polar residues; the sequence is STFSFPTTGSQSSTSIKS. The segment covering 131–142 has biased composition (basic residues); the sequence is SGRRKSYHRKSH. The residue at position 217 (S217) is a Phosphoserine.

The protein is Increased copper sensitivity protein 2 (ICS2) of Saccharomyces cerevisiae (strain ATCC 204508 / S288c) (Baker's yeast).